Reading from the N-terminus, the 302-residue chain is GTP cyclohydrolase FolE2 (302 aa).

Belongs to the GTP cyclohydrolase IV family.

The catalysed reaction is GTP + H2O = 7,8-dihydroneopterin 3'-triphosphate + formate + H(+). It functions in the pathway cofactor biosynthesis; 7,8-dihydroneopterin triphosphate biosynthesis; 7,8-dihydroneopterin triphosphate from GTP: step 1/1. In terms of biological role, converts GTP to 7,8-dihydroneopterin triphosphate. The polypeptide is GTP cyclohydrolase FolE2 (Pseudoalteromonas translucida (strain TAC 125)).